The primary structure comprises 657 residues: Transketolase (657 aa).

His31 contributes to the substrate binding site. Thiamine diphosphate-binding positions include His71 and 120-122 (GPL). A Mg(2+)-binding site is contributed by Asp158. Positions 159 and 188 each coordinate thiamine diphosphate. Positions 188 and 190 each coordinate Mg(2+). Substrate contacts are provided by His262, Arg354, and Ser381. Residue His262 participates in thiamine diphosphate binding. Glu408 (proton donor) is an active-site residue. Residue Phe434 coordinates thiamine diphosphate. Residues His458, Asp466, and Arg517 each contribute to the substrate site.

It belongs to the transketolase family. In terms of assembly, homodimer. Requires Mg(2+) as cofactor. Ca(2+) serves as cofactor. Mn(2+) is required as a cofactor. The cofactor is Co(2+). It depends on thiamine diphosphate as a cofactor.

It carries out the reaction D-sedoheptulose 7-phosphate + D-glyceraldehyde 3-phosphate = aldehydo-D-ribose 5-phosphate + D-xylulose 5-phosphate. The protein operates within carbohydrate biosynthesis; Calvin cycle. It participates in carbohydrate degradation; pentose phosphate pathway. Catalyzes the transfer of a two-carbon ketol group from a ketose donor to an aldose acceptor, via a covalent intermediate with the cofactor thiamine pyrophosphate. This is Transketolase (tklB) from Cereibacter sphaeroides (Rhodobacter sphaeroides).